A 192-amino-acid chain; its full sequence is Transmembrane protein 276 (192 aa).

Residues 1 to 32 (MVSKPRTEWSTVLSHLVLAGVSLHAAVSSVQS) form the signal peptide. The next 4 helical transmembrane spans lie at 35-55 (GAAA…APGP), 63-83 (AGAW…FHWV), 92-112 (LLLG…PEGC), and 114-134 (VAGQ…AVFT).

Its subcellular location is the membrane. In Mus musculus (Mouse), this protein is Transmembrane protein 276.